Consider the following 732-residue polypeptide: Iron-sulfur clusters transporter ATM1, mitochondrial (732 aa).

Residues 1 to 55 constitute a mitochondrion transit peptide; that stretch reads MGFGSCSRHALFTPAAFSGSFTTMTTSCFKRVYTAQIHGGDALGKRLPSVSSFSG. Residues 56–143 are Mitochondrial matrix-facing; it reads QLPRHGLHRQ…KNNPNVKFRV (88 aa). Residues 71–114 are disordered; it reads STSHRRQTSPPPSPRTTSQSPTVPSKASTTPPTSLNTSKPIATE. A compositionally biased stretch (low complexity) spans 85–95; that stretch reads RTTSQSPTVPS. Residues 96-114 show a composition bias toward polar residues; it reads KASTTPPTSLNTSKPIATE. A helical membrane pass occupies residues 144 to 164; it reads IGALTLLVAGKVLNVQVPFFF. Residues 144–432 form the ABC transmembrane type-1 domain; it reads IGALTLLVAG…LGTVYRELRQ (289 aa). Topologically, residues 165-181 are mitochondrial intermembrane; sequence KTIVDSLNVPITESTTV. Residues 182 to 202 form a helical membrane-spanning segment; sequence WVLAGASIAGYGAARILTTLF. At 203 to 262 the chain is on the mitochondrial matrix side; it reads GELRNAVFASVAQNAIRKVARETFEHLLNMDMKFHLERQTGGLTRAIDRGTKGISFILSS. The helical transmembrane segment at 263-283 threads the bilayer; it reads IVFHVIPTALEISMVCGILSW. Residue lysine 284 is a topological domain, mitochondrial intermembrane. The helical transmembrane segment at 285–305 threads the bilayer; it reads FGWDFAAVTAITMLLYTWFTI. At 306–378 the chain is on the mitochondrial matrix side; sequence KTTAWRTTFR…SLAALNSGQN (73 aa). Residues 311 to 315 and 374 to 377 contribute to the glutathione site; these read RTTFR and NSGQ. The helical transmembrane segment at 379–399 threads the bilayer; the sequence is FIFSSALTMMMLLGAQGIVKG. Residues 400–405 lie on the Mitochondrial intermembrane side of the membrane; that stretch reads TMTVGD. The chain crosses the membrane as a helical span at residues 406–426; it reads LVLVNQLVFQLSLPLNFLGTV. A glutathione-binding site is contributed by glycine 424. Over 427-732 the chain is Mitochondrial matrix; the sequence is YRELRQSLID…LEVVDEKKKQ (306 aa). The region spanning 466–702 is the ABC transporter domain; sequence IEFRNVAFAY…PGGVYHRLWQ (237 aa). ATP contacts are provided by residues tyrosine 475 and 499–506; that span reads GPSGCGKS. Positions 708 to 732 are disordered; sequence STQPTDEEIERQREELEVVDEKKKQ. Over residues 717–732 the composition is skewed to basic and acidic residues; that stretch reads ERQREELEVVDEKKKQ.

It belongs to the ABC transporter superfamily. ABCB family. Heavy Metal importer (TC 3.A.1.210) subfamily. As to quaternary structure, homodimer.

It is found in the mitochondrion inner membrane. Performs an essential function in the generation of cytoplasmic iron-sulfur proteins by mediating the ATP-dependent export of mitochondrial Fe/S cluster precursors synthesized by NFS1 and other mitochondrial proteins. Hydrolyzes ATP. Binds glutathione and may function by transporting a glutathione-conjugated iron-sulfur compound. Plays a role during copper stress, in a manner dependent on the copper metalloregulatory transcription factor CUF1. In Cryptococcus neoformans var. grubii serotype A (strain H99 / ATCC 208821 / CBS 10515 / FGSC 9487) (Filobasidiella neoformans var. grubii), this protein is Iron-sulfur clusters transporter ATM1, mitochondrial.